We begin with the raw amino-acid sequence, 91 residues long: DNA-directed RNA polymerase subunit omega (91 aa).

This sequence belongs to the RNA polymerase subunit omega family. The RNAP catalytic core consists of 2 alpha, 1 beta, 1 beta' and 1 omega subunit. When a sigma factor is associated with the core the holoenzyme is formed, which can initiate transcription.

It catalyses the reaction RNA(n) + a ribonucleoside 5'-triphosphate = RNA(n+1) + diphosphate. In terms of biological role, promotes RNA polymerase assembly. Latches the N- and C-terminal regions of the beta' subunit thereby facilitating its interaction with the beta and alpha subunits. In Yersinia pestis bv. Antiqua (strain Antiqua), this protein is DNA-directed RNA polymerase subunit omega.